Consider the following 262-residue polypeptide: Acyl-[acyl-carrier-protein]--UDP-N-acetylglucosamine O-acyltransferase (262 aa).

This sequence belongs to the transferase hexapeptide repeat family. LpxA subfamily. As to quaternary structure, homotrimer.

It localises to the cytoplasm. It catalyses the reaction a (3R)-hydroxyacyl-[ACP] + UDP-N-acetyl-alpha-D-glucosamine = a UDP-3-O-[(3R)-3-hydroxyacyl]-N-acetyl-alpha-D-glucosamine + holo-[ACP]. The protein operates within glycolipid biosynthesis; lipid IV(A) biosynthesis; lipid IV(A) from (3R)-3-hydroxytetradecanoyl-[acyl-carrier-protein] and UDP-N-acetyl-alpha-D-glucosamine: step 1/6. Its function is as follows. Involved in the biosynthesis of lipid A, a phosphorylated glycolipid that anchors the lipopolysaccharide to the outer membrane of the cell. The polypeptide is Acyl-[acyl-carrier-protein]--UDP-N-acetylglucosamine O-acyltransferase (Paraburkholderia phytofirmans (strain DSM 17436 / LMG 22146 / PsJN) (Burkholderia phytofirmans)).